The chain runs to 102 residues: Glutaredoxin 1 (102 aa).

Positions methionine 1–threonine 96 constitute a Glutaredoxin domain. Cysteine 17 and cysteine 20 are joined by a disulfide.

Belongs to the glutaredoxin family. Monomer.

The protein localises to the cytoplasm. Functionally, has a glutathione-disulfide oxidoreductase activity in the presence of NADPH and glutathione reductase. Reduces low molecular weight disulfides and proteins. This is Glutaredoxin 1 (grxC1) from Rickettsia conorii (strain ATCC VR-613 / Malish 7).